The sequence spans 202 residues: ATP-dependent Clp protease proteolytic subunit (202 aa).

The active-site Nucleophile is the serine 101. The active site involves histidine 126.

Belongs to the peptidase S14 family. Component of the chloroplastic Clp protease core complex.

It is found in the plastid. The protein resides in the chloroplast stroma. It catalyses the reaction Hydrolysis of proteins to small peptides in the presence of ATP and magnesium. alpha-casein is the usual test substrate. In the absence of ATP, only oligopeptides shorter than five residues are hydrolyzed (such as succinyl-Leu-Tyr-|-NHMec, and Leu-Tyr-Leu-|-Tyr-Trp, in which cleavage of the -Tyr-|-Leu- and -Tyr-|-Trp bonds also occurs).. Functionally, cleaves peptides in various proteins in a process that requires ATP hydrolysis. Has a chymotrypsin-like activity. Plays a major role in the degradation of misfolded proteins. In Drimys granadensis, this protein is ATP-dependent Clp protease proteolytic subunit.